Consider the following 134-residue polypeptide: Neuropeptide-like peptide 11 (134 aa).

A signal peptide spans 1 to 20 (MMSTLALVSLAIFGIAVVCA). The propeptide occupies 21-106 (APKPATVPVA…YNRLIDAGKK (86 aa)). The residue at position 131 (alanine 131) is an Alanine amide.

This Caenorhabditis elegans protein is Neuropeptide-like peptide 11 (nlp-11).